Consider the following 276-residue polypeptide: Dermonecrotic toxin LvSicTox-alphaII1 (276 aa).

The active site involves histidine 5. Positions 25 and 27 each coordinate Mg(2+). Catalysis depends on histidine 41, which acts as the Nucleophile. 2 disulfides stabilise this stretch: cysteine 45–cysteine 51 and cysteine 47–cysteine 193. Position 85 (aspartate 85) interacts with Mg(2+).

Belongs to the arthropod phospholipase D family. Class II subfamily. Mg(2+) is required as a cofactor. In terms of tissue distribution, expressed by the venom gland.

It localises to the secreted. It carries out the reaction an N-(acyl)-sphingosylphosphocholine = an N-(acyl)-sphingosyl-1,3-cyclic phosphate + choline. The catalysed reaction is an N-(acyl)-sphingosylphosphoethanolamine = an N-(acyl)-sphingosyl-1,3-cyclic phosphate + ethanolamine. The enzyme catalyses a 1-acyl-sn-glycero-3-phosphocholine = a 1-acyl-sn-glycero-2,3-cyclic phosphate + choline. It catalyses the reaction a 1-acyl-sn-glycero-3-phosphoethanolamine = a 1-acyl-sn-glycero-2,3-cyclic phosphate + ethanolamine. Its function is as follows. Dermonecrotic toxins cleave the phosphodiester linkage between the phosphate and headgroup of certain phospholipids (sphingolipid and lysolipid substrates), forming an alcohol (often choline) and a cyclic phosphate. This toxin acts on sphingomyelin (SM). It may also act on ceramide phosphoethanolamine (CPE), lysophosphatidylcholine (LPC) and lysophosphatidylethanolamine (LPE), but not on lysophosphatidylserine (LPS), and lysophosphatidylglycerol (LPG). It acts by transphosphatidylation, releasing exclusively cyclic phosphate products as second products. Induces dermonecrosis, hemolysis, increased vascular permeability, edema, inflammatory response, and platelet aggregation. The polypeptide is Dermonecrotic toxin LvSicTox-alphaII1 (Loxosceles variegata (Recluse spider)).